The primary structure comprises 112 residues: ATP synthase subunit c (112 aa).

The next 2 helical transmembrane spans lie at 36–56 and 81–101; these read FSVL…AIGM and MFIA…IALI.

It belongs to the ATPase C chain family. In terms of assembly, F-type ATPases have 2 components, F(1) - the catalytic core - and F(0) - the membrane proton channel. F(1) has five subunits: alpha(3), beta(3), gamma(1), delta(1), epsilon(1). F(0) has three main subunits: a(1), b(2) and c(10-14). The alpha and beta chains form an alternating ring which encloses part of the gamma chain. F(1) is attached to F(0) by a central stalk formed by the gamma and epsilon chains, while a peripheral stalk is formed by the delta and b chains.

It localises to the cell inner membrane. F(1)F(0) ATP synthase produces ATP from ADP in the presence of a proton or sodium gradient. F-type ATPases consist of two structural domains, F(1) containing the extramembraneous catalytic core and F(0) containing the membrane proton channel, linked together by a central stalk and a peripheral stalk. During catalysis, ATP synthesis in the catalytic domain of F(1) is coupled via a rotary mechanism of the central stalk subunits to proton translocation. Its function is as follows. Key component of the F(0) channel; it plays a direct role in translocation across the membrane. A homomeric c-ring of between 10-14 subunits forms the central stalk rotor element with the F(1) delta and epsilon subunits. In Campylobacter jejuni (strain RM1221), this protein is ATP synthase subunit c.